A 696-amino-acid chain; its full sequence is D-(-)-3-hydroxybutyrate oligomer hydrolase (696 aa).

Positions 1–26 (MTKLGWGRRVVWGAALAAVAMLGACN) are cleaved as a signal peptide. Ser309 acts as the Charge relay system in catalysis.

Belongs to the D-(-)-3-hydroxybutyrate oligomer hydrolase family.

It localises to the secreted. The enzyme catalyses (3R)-hydroxybutanoate dimer + H2O = 2 (R)-3-hydroxybutanoate + H(+). It functions in the pathway lipid metabolism; butanoate metabolism. Its function is as follows. Participates in the degradation of poly-3-hydroxybutyrate (PHB). It works downstream of poly(3-hydroxybutyrate) depolymerase, hydrolyzing D(-)-3-hydroxybutyrate oligomers of various length (3HB-oligomers) into 3HB-monomers. The sequence is that of D-(-)-3-hydroxybutyrate oligomer hydrolase from Burkholderia cenocepacia (strain HI2424).